We begin with the raw amino-acid sequence, 103 residues long: UPF0102 protein aq_041 (103 aa).

It belongs to the UPF0102 family.

The protein is UPF0102 protein aq_041 of Aquifex aeolicus (strain VF5).